The following is a 30-amino-acid chain: Trypsin inhibitor 3 (30 aa).

Gln1 carries the post-translational modification Pyrrolidone carboxylic acid. Disulfide bonds link Cys4-Cys21, Cys11-Cys23, and Cys17-Cys29.

It localises to the secreted. Functionally, inhibits trypsin; probably participates in a plant defense mechanism. The sequence is that of Trypsin inhibitor 3 from Momordica cochinchinensis (Spiny bitter cucumber).